We begin with the raw amino-acid sequence, 241 residues long: Protein GrpE (241 aa).

Positions 28-49 are enriched in basic and acidic residues; it reads QNCQKEETQTTNKDNQKEDETF. Positions 28–78 are disordered; the sequence is QNCQKEETQTTNKDNQKEDETFKNQPNKTKQTNTKQQKHLSKESSHQQITK. Positions 50–62 are enriched in low complexity; that stretch reads KNQPNKTKQTNTK.

Belongs to the GrpE family. In terms of assembly, homodimer.

It is found in the cytoplasm. Participates actively in the response to hyperosmotic and heat shock by preventing the aggregation of stress-denatured proteins, in association with DnaK and GrpE. It is the nucleotide exchange factor for DnaK and may function as a thermosensor. Unfolded proteins bind initially to DnaJ; upon interaction with the DnaJ-bound protein, DnaK hydrolyzes its bound ATP, resulting in the formation of a stable complex. GrpE releases ADP from DnaK; ATP binding to DnaK triggers the release of the substrate protein, thus completing the reaction cycle. Several rounds of ATP-dependent interactions between DnaJ, DnaK and GrpE are required for fully efficient folding. The protein is Protein GrpE of Aster yellows witches'-broom phytoplasma (strain AYWB).